Consider the following 246-residue polypeptide: Probable transcriptional regulatory protein ASA_2843 (246 aa).

This sequence belongs to the TACO1 family.

The protein resides in the cytoplasm. This chain is Probable transcriptional regulatory protein ASA_2843, found in Aeromonas salmonicida (strain A449).